Here is a 111-residue protein sequence, read N- to C-terminus: UPF0060 membrane protein Ajs_1473 (111 aa).

A run of 4 helical transmembrane segments spans residues 8 to 28, 33 to 53, 65 to 85, and 88 to 108; these read ILFA…WLVV, SAWL…LLTL, YGGM…GVAL, and WDFV…LQPA.

Belongs to the UPF0060 family.

Its subcellular location is the cell inner membrane. The protein is UPF0060 membrane protein Ajs_1473 of Acidovorax sp. (strain JS42).